Reading from the N-terminus, the 420-residue chain is L-rhamnose isomerase (420 aa).

Mn(2+) is bound by residues H262, D294, and D296.

It belongs to the rhamnose isomerase family. In terms of assembly, homotetramer. Mn(2+) is required as a cofactor.

It localises to the cytoplasm. It carries out the reaction L-rhamnopyranose = L-rhamnulose. The protein operates within carbohydrate degradation; L-rhamnose degradation; glycerone phosphate from L-rhamnose: step 1/3. In terms of biological role, catalyzes the interconversion of L-rhamnose and L-rhamnulose. This is L-rhamnose isomerase from Pectobacterium atrosepticum (strain SCRI 1043 / ATCC BAA-672) (Erwinia carotovora subsp. atroseptica).